The sequence spans 273 residues: Putative tyrosine-protein phosphatase H16_A0669 (273 aa).

The first 15 residues, 1-15 (MIKWLQRAGCLSAHA), serve as a signal peptide directing secretion. The active-site Phosphocysteine intermediate is Cys169.

This sequence belongs to the protein-tyrosine phosphatase family.

It catalyses the reaction O-phospho-L-tyrosyl-[protein] + H2O = L-tyrosyl-[protein] + phosphate. The chain is Putative tyrosine-protein phosphatase H16_A0669 from Cupriavidus necator (strain ATCC 17699 / DSM 428 / KCTC 22496 / NCIMB 10442 / H16 / Stanier 337) (Ralstonia eutropha).